Here is a 485-residue protein sequence, read N- to C-terminus: ATP-dependent 6-phosphofructokinase (485 aa).

Residues glycine 105, 171–172 (RG), and 196–199 (GDGT) each bind ATP. Position 197 (aspartate 197) interacts with Mg(2+). Residues 225–227 (TID), 270–272 (MGR), glutamate 323, and 378–381 (YMIR) each bind substrate. Aspartate 227 (proton acceptor) is an active-site residue. Positions 483-485 (SKL) match the Peroxisomal targeting signal motif.

This sequence belongs to the phosphofructokinase type A (PFKA) family. PPi-dependent PFK group II subfamily. Atypical ATP-dependent clade 'X' sub-subfamily. In terms of assembly, homotetramer. The cofactor is Mg(2+).

It localises to the glycosome. The enzyme catalyses beta-D-fructose 6-phosphate + ATP = beta-D-fructose 1,6-bisphosphate + ADP + H(+). It functions in the pathway carbohydrate degradation; glycolysis; D-glyceraldehyde 3-phosphate and glycerone phosphate from D-glucose: step 3/4. Allosterically activated by AMP. Functionally, catalyzes the phosphorylation of D-fructose 6-phosphate to fructose 1,6-bisphosphate by ATP, the first committing step of glycolysis. The protein is ATP-dependent 6-phosphofructokinase of Trypanosoma cruzi (strain CL Brener).